Consider the following 405-residue polypeptide: CLIP domain-containing serine protease B8 (405 aa).

Residues 1–24 (MSSAVLLLLVCGCALAVLSPVAYG) form the signal peptide. Disulfide bonds link C41/C94, C52/C84, and C58/C95. Residues 41-95 (CDIPNEPNPGQCMLPAECVAYGKINDVSSLSSIERFSFIKQIQCNGSDTVPYVCC) form the Clip domain. N-linked (GlcNAc...) asparagine glycosylation is found at N85 and N108. The Peptidase S1 domain maps to 137–404 (IRGGQLAEID…YLPWIKMYTG (268 aa)). A disulfide bridge links C167 with C183. Catalysis depends on charge relay system residues H182 and D249. 2 cysteine pairs are disulfide-bonded: C322–C339 and C349–C380. The Charge relay system role is filled by S353.

This sequence belongs to the peptidase S1 family. CLIP subfamily. Proteolytic cleavage is necessary for activation. Cleaved and activated by CLIPB4.

It localises to the secreted. Its function is as follows. Serine protease that functions in the melanization-mediated immune response. Preferentially, cleaves substrates with an arginine at the P1 site. May be involved in the activation of the prophenoloxidase cascade upstream of CLIPB9; does not cleave prophenoloxidase. This is CLIP domain-containing serine protease B8 from Anopheles gambiae (African malaria mosquito).